We begin with the raw amino-acid sequence, 138 residues long: Large ribosomal subunit protein uL16 (138 aa).

Residues 1-13 show a composition bias toward basic residues; sequence MLQPSRRKYRKEQ. Residues 1 to 24 form a disordered region; sequence MLQPSRRKYRKEQKGRNTGLASRG.

This sequence belongs to the universal ribosomal protein uL16 family. Part of the 50S ribosomal subunit.

In terms of biological role, binds 23S rRNA and is also seen to make contacts with the A and possibly P site tRNAs. This Bordetella bronchiseptica (strain ATCC BAA-588 / NCTC 13252 / RB50) (Alcaligenes bronchisepticus) protein is Large ribosomal subunit protein uL16.